Here is a 314-residue protein sequence, read N- to C-terminus: Olfactory receptor 1E5 (314 aa).

Residues 1–25 (MMGQNQTSISDFLLLGLPIQPEQQN) are Extracellular-facing. A glycan (N-linked (GlcNAc...) asparagine) is linked at Asn-5. The helical transmembrane segment at 26-49 (LCYALFLAMYLTTLLGNLLIIVLI) threads the bilayer. Over 50–57 (RLDSHLHT) the chain is Cytoplasmic. A helical transmembrane segment spans residues 58–79 (PMYLFLSNLSFSDLCFSSVTIP). Residues 80–100 (KLLQNMQNQDPSIPYADCLTQ) are Extracellular-facing. Cys-97 and Cys-189 are oxidised to a cystine. A helical transmembrane segment spans residues 101–120 (MYFFLLFGDLESFLLVAMAY). The Cytoplasmic portion of the chain corresponds to 121–139 (DRYVAICFPLHYTAIMSPM). Residues 140–158 (LCLSLVALSWVLTTFHAML) traverse the membrane as a helical segment. The Extracellular portion of the chain corresponds to 159 to 196 (HTLLMARLCFCADNVIPHFFCDMSALLKLACSDTRVNE). Residues 197-219 (WVIFIMGGLIVVIPFLLILGSYA) form a helical membrane-spanning segment. Residues 220 to 236 (RIVSSILKVPSSKGICK) are Cytoplasmic-facing. A helical membrane pass occupies residues 237-260 (AFSTCGSHLSVVSLFYGTIIGLYL). Residues 261-272 (CPSANSSTLKET) are Extracellular-facing. Asn-265 is a glycosylation site (N-linked (GlcNAc...) asparagine). Residues 273 to 292 (VMAMMYTVVTPMLNPFIYSL) traverse the membrane as a helical segment. The Cytoplasmic portion of the chain corresponds to 293–314 (RNRDMKGALERVIXKRKNPFLL).

The protein belongs to the G-protein coupled receptor 1 family.

The protein resides in the cell membrane. Functionally, odorant receptor. The chain is Olfactory receptor 1E5 (OR1E5) from Pan troglodytes (Chimpanzee).